The following is a 173-amino-acid chain: Photosystem I assembly protein Ycf3 (173 aa).

TPR repeat units follow at residues 35–68 (AFAY…EDDP), 72–105 (SYIL…NPRM), and 120–153 (GEKA…APNN).

It belongs to the Ycf3 family.

It localises to the cellular thylakoid membrane. Functionally, essential for the assembly of the photosystem I (PSI) complex. May act as a chaperone-like factor to guide the assembly of the PSI subunits. This Picosynechococcus sp. (strain ATCC 27264 / PCC 7002 / PR-6) (Agmenellum quadruplicatum) protein is Photosystem I assembly protein Ycf3.